Here is a 524-residue protein sequence, read N- to C-terminus: Ribonuclease Y (524 aa).

Residues 2–22 (GIVINLFLIIAASIVFFVVGF) traverse the membrane as a helical segment. The region spanning 214–299 (ALSVVHIQSD…KAYQDAKKEI (86 aa)) is the KH domain. In terms of domain architecture, HD spans 340–432 (LLQHSREVAM…VDAANIVSLS (93 aa)).

The protein belongs to the RNase Y family.

The protein localises to the cell membrane. Endoribonuclease that initiates mRNA decay. This chain is Ribonuclease Y, found in Chlorobaculum tepidum (strain ATCC 49652 / DSM 12025 / NBRC 103806 / TLS) (Chlorobium tepidum).